The sequence spans 432 residues: Monooxygenase penA (432 aa).

Residues 7–29 (FKIAIIGAGPAGLTLASLLTASP) form a helical membrane-spanning segment. N-linked (GlcNAc...) asparagine glycosylation occurs at Asn33.

The protein belongs to the aromatic-ring hydroxylase family. It depends on FAD as a cofactor.

The protein localises to the membrane. It functions in the pathway secondary metabolite biosynthesis. It participates in alkaloid biosynthesis. The protein operates within mycotoxin biosynthesis. Monooxygenase; part of the gene cluster that mediates the biosynthesis of penigequinolones, potent insecticidal alkaloids that contain a highly modified 10-carbon prenyl group. The first stage is catalyzed by the nonribosomal peptide synthetase penN that condenses anthranilic acid and O-methyl-L-tyrosine to produce 4'-methoxycyclopeptin. 4'-methoxycyclopeptin is then converted to 4'-methoxydehydrocyclopeptin by the ketoglutarate-dependent dioxygenase penM through dehydrogenation to form a double bond between C-alpha and C-beta of the O-methyltyrosine side chain. PenM also converts its first product methoxydehydrocyclopeptin to 4'-methoxycyclopenin. The following conversion of 4'methoxycyclopenin into 4'-methoxyviridicatin is catalyzed by the cyclopenase penL. 4'-methoxyviridicatin is the precursor of quinolone natural products, and is further converted to quinolinone B. The prenyltransferase penI then catalyzes the canonical Friedel-Crafts alkylation of quinolinone B with dimethylallyl cation to yield dimethylallyl quinolone, which is subjected to FAD-dependent dehydrogenation by the FAD-linked oxidoreductase penH to yield conjugated aryl diene. The delta(3') double bond then serves as the site of the second alkylation with DMAPP catalyzed by the prenyltransferase penG to yield a carbenium ion intermediate, which can be attacked by H(2)O to yield a styrenyl quinolone containing a C3'-hydroxyprenyl chain, or undergo cyclization to yield yaequinolones J1 and J2. The conversion of the styrenyl quinolone into the tetrahydrofuran-containing yaequinolone C is performed by the FAD-dependent monooxygenase penE and involves epoxidation of the terminal C7'-C8' olefin, followed by epoxide ring opening initiated by the C3' hydroxyl group. The predicted cysteine hydrolase penJ acts as an epoxide hydrolase that enhances the rate of the 5-exo-tet cyclization step, increasing the yield of yaequinolone C. PenF catalyzes the cationic rearrangement of the epoxide formed by penE (before ring opening to produce yaequinolone C) into yaequinolone D. Finally, the short-chain dehydrogenase/reductase (SDR)-like reductase penD, catalyzes both the dehydration of yaequinolone D and the reduction of the resulting oxonium to yield penigequinolone. This is Monooxygenase penA from Penicillium thymicola.